The following is a 245-amino-acid chain: UDP-N-acetyl-D-mannosaminuronic acid transferase (245 aa).

This sequence belongs to the glycosyltransferase 26 family.

The catalysed reaction is UDP-N-acetyl-alpha-D-mannosaminouronate + N-acetyl-alpha-D-glucosaminyl-di-trans,octa-cis-undecaprenyl diphosphate = beta-D-ManNAcA-(1-&gt;4)-alpha-D-GlcNAc-di-trans,octa-cis-undecaprenyl diphosphate + UDP + H(+). It participates in bacterial outer membrane biogenesis; enterobacterial common antigen biosynthesis. Functionally, catalyzes the synthesis of Und-PP-GlcNAc-ManNAcA (Lipid II), the second lipid-linked intermediate involved in enterobacterial common antigen (ECA) synthesis. The polypeptide is UDP-N-acetyl-D-mannosaminuronic acid transferase (Photorhabdus laumondii subsp. laumondii (strain DSM 15139 / CIP 105565 / TT01) (Photorhabdus luminescens subsp. laumondii)).